A 362-amino-acid chain; its full sequence is 3-isopropylmalate dehydrogenase (362 aa).

75–88 (GPKWANLPPTEQPE) serves as a coordination point for NAD(+). The substrate site is built by Arg-96, Arg-106, Arg-135, and Asp-224. Asp-224, Asp-248, and Asp-252 together coordinate Mg(2+). 282–294 (GSAPDIAGLGVAN) contributes to the NAD(+) binding site.

This sequence belongs to the isocitrate and isopropylmalate dehydrogenases family. LeuB type 1 subfamily. In terms of assembly, homodimer. Mg(2+) is required as a cofactor. Mn(2+) serves as cofactor.

Its subcellular location is the cytoplasm. It carries out the reaction (2R,3S)-3-isopropylmalate + NAD(+) = 4-methyl-2-oxopentanoate + CO2 + NADH. It participates in amino-acid biosynthesis; L-leucine biosynthesis; L-leucine from 3-methyl-2-oxobutanoate: step 3/4. Catalyzes the oxidation of 3-carboxy-2-hydroxy-4-methylpentanoate (3-isopropylmalate) to 3-carboxy-4-methyl-2-oxopentanoate. The product decarboxylates to 4-methyl-2 oxopentanoate. The chain is 3-isopropylmalate dehydrogenase from Colwellia psychrerythraea (strain 34H / ATCC BAA-681) (Vibrio psychroerythus).